A 460-amino-acid chain; its full sequence is Phosphomethylpyrimidine synthase (460 aa).

Substrate-binding positions include Asn-80, Met-109, Tyr-139, His-175, 195 to 197, 236 to 239, and Glu-275; these read SRG and DSLR. His-279 serves as a coordination point for Zn(2+). Tyr-302 lines the substrate pocket. His-343 contacts Zn(2+). [4Fe-4S] cluster-binding residues include Cys-423, Cys-426, and Cys-431.

Belongs to the ThiC family. Requires [4Fe-4S] cluster as cofactor.

The catalysed reaction is 5-amino-1-(5-phospho-beta-D-ribosyl)imidazole + S-adenosyl-L-methionine = 4-amino-2-methyl-5-(phosphooxymethyl)pyrimidine + CO + 5'-deoxyadenosine + formate + L-methionine + 3 H(+). It participates in cofactor biosynthesis; thiamine diphosphate biosynthesis. Functionally, catalyzes the synthesis of the hydroxymethylpyrimidine phosphate (HMP-P) moiety of thiamine from aminoimidazole ribotide (AIR) in a radical S-adenosyl-L-methionine (SAM)-dependent reaction. In Rippkaea orientalis (strain PCC 8801 / RF-1) (Cyanothece sp. (strain PCC 8801)), this protein is Phosphomethylpyrimidine synthase.